We begin with the raw amino-acid sequence, 391 residues long: Transcription factor TCP3 (391 aa).

The disordered stretch occupies residues 1–34 (MAPDNDHFLDSPSPPLLEMRHHQSATENGGGCGE). The 59-residue stretch at 49–107 (RKDRHSKVCTAKGPRDRRVRLSAPTAIQFYDVQDRLGFDRPSKAVDWLITKAKSAIDDL) folds into the TCP domain. Disordered stretches follow at residues 122-168 (HAAA…PASM), 317-345 (HHHHHHHQQSMTTDDLHHHHPYHIPPGIH), and 363-391 (FRIPARFQGEQEEHGGDNKPSSASSDSRH). Over residues 381–391 (KPSSASSDSRH) the composition is skewed to polar residues.

Interacts with SPL. Interacts with KIN10; KIN11 and FLZ3. In terms of tissue distribution, expressed in cotyledons, particularly in the vascular region, in leaves, roots, buds, flowers and immature siliques.

The protein resides in the nucleus. In terms of biological role, plays a pivotal role in the control of morphogenesis of shoot organs by negatively regulating the expression of boundary-specific genes such as CUC genes, probably through the induction of miRNA (e.g. miR164). Participates in ovule development. The polypeptide is Transcription factor TCP3 (TCP3) (Arabidopsis thaliana (Mouse-ear cress)).